A 351-amino-acid polypeptide reads, in one-letter code: Transmembrane protein 255A (351 aa).

The next 4 helical transmembrane spans lie at 30-50 (IYVT…GLAA), 57-77 (VTVG…LGII), 89-109 (LVAS…CAIV), and 226-246 (TILN…LGGF). Residues 302–331 (FPSSPPSGLSDEQEPQSPSPSPSYMWSSSA) form a disordered region.

The protein belongs to the TMEM255 family.

It localises to the membrane. In Mus musculus (Mouse), this protein is Transmembrane protein 255A (Tmem255a).